Reading from the N-terminus, the 419-residue chain is Transcription termination factor Rho (419 aa).

In terms of domain architecture, Rho RNA-BD spans E48–R123. 3 RNA-binding regions span residues G61 to R66, D78 to Y80, and E108 to Y110. ATP is bound by residues G169–G174, K181–I186, and R212. The RNA-binding 2 stretch occupies residues V284–G288.

This sequence belongs to the Rho family. In terms of assembly, homohexamer. The homohexamer assembles into an open ring structure.

In terms of biological role, facilitates transcription termination by a mechanism that involves Rho binding to the nascent RNA, activation of Rho's RNA-dependent ATPase activity, and release of the mRNA from the DNA template. This chain is Transcription termination factor Rho, found in Pseudomonas fluorescens biotype C.